The primary structure comprises 133 residues: Small ribosomal subunit protein uS8 (133 aa).

The protein belongs to the universal ribosomal protein uS8 family. In terms of assembly, part of the 30S ribosomal subunit.

One of the primary rRNA binding proteins, it binds directly to 16S rRNA central domain where it helps coordinate assembly of the platform of the 30S subunit. The sequence is that of Small ribosomal subunit protein uS8 from Metallosphaera sedula (strain ATCC 51363 / DSM 5348 / JCM 9185 / NBRC 15509 / TH2).